Reading from the N-terminus, the 407-residue chain is Peptidase T (407 aa).

Residue histidine 82 participates in Zn(2+) binding. The active site involves aspartate 84. Residue aspartate 143 participates in Zn(2+) binding. The active-site Proton acceptor is glutamate 177. The Zn(2+) site is built by glutamate 178, aspartate 200, and histidine 382.

The protein belongs to the peptidase M20B family. It depends on Zn(2+) as a cofactor.

Its subcellular location is the cytoplasm. The catalysed reaction is Release of the N-terminal residue from a tripeptide.. Cleaves the N-terminal amino acid of tripeptides. This is Peptidase T from Streptococcus thermophilus (strain ATCC BAA-491 / LMD-9).